A 1425-amino-acid polypeptide reads, in one-letter code: Nephrocystin-4 (1425 aa).

Ser145 bears the Phosphoserine mark. Positions 448-554 (FSLSSDGPTE…VSHLEADLSQ (107 aa)) are disordered. Low complexity-rich tracts occupy residues 473–484 (PASPSGTPAPAA) and 507–530 (SPLS…SQSP). Residues 822–1425 (LTLANVGHAC…ETFCVKVLYQ (604 aa)) are sufficient for basal bodies localization.

The protein belongs to the NPHP4 family. As to quaternary structure, interacts with NPHP1 and RPGRIP1L/NPHP8; NPHP1, NPHP4 and RPGRIP1L are proposed to form a functional NPHP1-4-8 module localized to cell-cell contacts and the ciliary transition zone; NPHP4 mediates the interaction between NPHP1 and RPGRIP1L. Interacts with IQCB1/NPHP5; the interaction likely requires additional interactors. Interacts with RPGRIP1, CEP164, JADE1, PALS1, INADL, PARD6A, INVS, DVL2. Interacts with INTU; INTU mediates the interaction between NPHP4 and DAAM1. Interacts with JADE1. Interacts with SPATA7. As to expression, expressed in the retina (at protein level).

It localises to the cytoplasm. It is found in the cytoskeleton. The protein localises to the cilium basal body. Its subcellular location is the microtubule organizing center. The protein resides in the centrosome. It localises to the cell junction. It is found in the tight junction. In terms of biological role, involved in the organization of apical junctions; the function is proposed to implicate a NPHP1-4-8 module. Does not seem to be strictly required for ciliogenesis. Required for building functional cilia. Involved in the organization of the subapical actin network in multiciliated epithelial cells. Seems to recruit INT to basal bodies of motile cilia which subsequently interacts with actin-modifying proteins such as DAAM1. In cooperation with INVS may down-regulate the canonical Wnt pathway and promote the Wnt-PCP pathway by regulating expression and subcellular location of disheveled proteins. Stabilizes protein levels of JADE1 and promotes its translocation to the nucleus leading to cooperative inhibition of canonical Wnt signaling. Acts as negative regulator of the hippo pathway by association with LATS1 and modifying LATS1-dependent phosphorylation and localization of WWTR1/TAZ. The polypeptide is Nephrocystin-4 (Nphp4) (Mus musculus (Mouse)).